A 260-amino-acid chain; its full sequence is Phosphate import ATP-binding protein PstB 1 (260 aa).

The ABC transporter domain maps to 8-255; it reads TETKNVYDVL…PEHKRTEDYV (248 aa). 46–53 contacts ATP; that stretch reads GPSGCGKS.

The protein belongs to the ABC transporter superfamily. Phosphate importer (TC 3.A.1.7) family. The complex is composed of two ATP-binding proteins (PstB), two transmembrane proteins (PstC and PstA) and a solute-binding protein (PstS).

Its subcellular location is the cell membrane. It catalyses the reaction phosphate(out) + ATP + H2O = ADP + 2 phosphate(in) + H(+). Part of the ABC transporter complex PstSACB involved in phosphate import. Responsible for energy coupling to the transport system. This Shouchella clausii (strain KSM-K16) (Alkalihalobacillus clausii) protein is Phosphate import ATP-binding protein PstB 1.